The sequence spans 446 residues: MSSKRQTKGCNVVVIGTQWGDEGKGKVVDWLTDHAQAVVRFQGGHNAGHTLIIGDKKTILRLIPSGIMHKTVICYIGNGVVLSPEALFKEIGELEAAGLDVQSRLKISEATTLILPYHVAIDHAREKKRGEAKIGTTGRGIGPAYEDKVARRALRVQDLFYPEKFSEQLRENLEYHNFMLTNYYGAEPVNYEKTLSEAMSYAERLKPMVMDVSSALYAAEQSGQNLLFEGAQGTLLDIDHGTYPYVTSSNCVAGNAAAGSGVGPDSLQYILGITKAYCTRVGAGPFPSELYDHDNPAKQDLIGIRLAEVGKEFGSVTGRPRRTGWLDAAALKRSIQINSLSGLCITKLDVLDGLETIRLCVGYTLDGKKLDMLPRGAESVARCEPIYEDFPGWKGTTFGIREWDKLPVEAQKFLRRIEEVAGKPIAMVSTGPERDETILLQHPFQD.

GTP-binding positions include 20 to 26 (GDEGKGK) and 48 to 50 (GHT). D21 acts as the Proton acceptor in catalysis. Positions 21 and 48 each coordinate Mg(2+). IMP-binding positions include 21 to 24 (DEGK), 46 to 49 (NAGH), T137, R151, Q232, T247, and R319. The active-site Proton donor is the H49. 315–321 (SVTGRPR) contributes to the substrate binding site. GTP is bound by residues R321, 347–349 (KLD), and 429–431 (STG).

The protein belongs to the adenylosuccinate synthetase family. In terms of assembly, homodimer. Requires Mg(2+) as cofactor.

The protein localises to the cytoplasm. It carries out the reaction IMP + L-aspartate + GTP = N(6)-(1,2-dicarboxyethyl)-AMP + GDP + phosphate + 2 H(+). The protein operates within purine metabolism; AMP biosynthesis via de novo pathway; AMP from IMP: step 1/2. Its function is as follows. Plays an important role in the de novo pathway of purine nucleotide biosynthesis. Catalyzes the first committed step in the biosynthesis of AMP from IMP. This Polynucleobacter necessarius subsp. necessarius (strain STIR1) protein is Adenylosuccinate synthetase.